A 276-amino-acid chain; its full sequence is Large ribosomal subunit protein uL2c (276 aa).

The interval Arg221–Lys276 is disordered. Over residues Lys258 to Lys276 the composition is skewed to basic residues.

This sequence belongs to the universal ribosomal protein uL2 family. As to quaternary structure, part of the 50S ribosomal subunit.

It localises to the plastid. The protein localises to the chloroplast. This is Large ribosomal subunit protein uL2c (rpl2) from Stigeoclonium helveticum (Green alga).